Consider the following 334-residue polypeptide: GTP 3',8-cyclase (334 aa).

The Radical SAM core domain occupies 11 to 235; that stretch reads GFNRKVDYLR…VESAESSQGP (225 aa). GTP is bound at residue Arg-20. 2 residues coordinate [4Fe-4S] cluster: Cys-27 and Cys-31. Tyr-33 serves as a coordination point for S-adenosyl-L-methionine. Cys-34 serves as a coordination point for [4Fe-4S] cluster. Residue Arg-69 coordinates GTP. An S-adenosyl-L-methionine-binding site is contributed by Gly-73. Thr-100 contacts GTP. Ser-124 provides a ligand contact to S-adenosyl-L-methionine. Position 161 (Lys-161) interacts with GTP. S-adenosyl-L-methionine is bound at residue Met-195. 2 residues coordinate [4Fe-4S] cluster: Cys-260 and Cys-263. Residue 265-267 participates in GTP binding; that stretch reads RVR. Residue Cys-277 participates in [4Fe-4S] cluster binding.

This sequence belongs to the radical SAM superfamily. MoaA family. Monomer and homodimer. Requires [4Fe-4S] cluster as cofactor.

The enzyme catalyses GTP + AH2 + S-adenosyl-L-methionine = (8S)-3',8-cyclo-7,8-dihydroguanosine 5'-triphosphate + 5'-deoxyadenosine + L-methionine + A + H(+). The protein operates within cofactor biosynthesis; molybdopterin biosynthesis. In terms of biological role, catalyzes the cyclization of GTP to (8S)-3',8-cyclo-7,8-dihydroguanosine 5'-triphosphate. The sequence is that of GTP 3',8-cyclase from Pseudomonas entomophila (strain L48).